Reading from the N-terminus, the 305-residue chain is GTPase Era (305 aa).

Residues 11–181 (RSGFVSFVGR…IKVMTDLLPE (171 aa)) form the Era-type G domain. The G1 stretch occupies residues 19–26 (GRPNTGKS). Residue 19 to 26 (GRPNTGKS) participates in GTP binding. Residues 45–49 (ETTRH) form a G2 region. A G3 region spans residues 66-69 (DTPG). Residues 66–70 (DTPGL) and 130–133 (TKAD) contribute to the GTP site. A G4 region spans residues 130-133 (TKAD). Residues 160 to 162 (VSS) are G5. In terms of domain architecture, KH type-2 spans 212–291 (LKNELPHSVA…FLDLRIKVLK (80 aa)).

Belongs to the TRAFAC class TrmE-Era-EngA-EngB-Septin-like GTPase superfamily. Era GTPase family. In terms of assembly, monomer.

It localises to the cytoplasm. The protein resides in the cell membrane. Functionally, an essential GTPase that binds both GDP and GTP, with rapid nucleotide exchange. Plays a role in 16S rRNA processing and 30S ribosomal subunit biogenesis and possibly also in cell cycle regulation and energy metabolism. In Corynebacterium glutamicum (strain ATCC 13032 / DSM 20300 / JCM 1318 / BCRC 11384 / CCUG 27702 / LMG 3730 / NBRC 12168 / NCIMB 10025 / NRRL B-2784 / 534), this protein is GTPase Era.